Reading from the N-terminus, the 203-residue chain is ATP synthase subunit delta, chloroplastic (203 aa).

The protein belongs to the ATPase delta chain family. F-type ATPases have 2 components, F(1) - the catalytic core - and F(0) - the membrane proton channel. F(1) has five subunits: alpha(3), beta(3), gamma(1), delta(1), epsilon(1). CF(0) has four main subunits: a(1), b(1), b'(1) and c(10-14). The alpha and beta chains form an alternating ring which encloses part of the gamma chain. F(1) is attached to F(0) by a central stalk formed by the gamma and epsilon chains, while a peripheral stalk is formed by the delta, b and b' chains.

The protein resides in the plastid. Its subcellular location is the chloroplast thylakoid membrane. Its function is as follows. F(1)F(0) ATP synthase produces ATP from ADP in the presence of a proton or sodium gradient. F-type ATPases consist of two structural domains, F(1) containing the extramembraneous catalytic core and F(0) containing the membrane proton channel, linked together by a central stalk and a peripheral stalk. During catalysis, ATP synthesis in the catalytic domain of F(1) is coupled via a rotary mechanism of the central stalk subunits to proton translocation. Functionally, this protein is part of the stalk that links CF(0) to CF(1). It either transmits conformational changes from CF(0) to CF(1) or is implicated in proton conduction. This chain is ATP synthase subunit delta, chloroplastic, found in Heterosigma akashiwo (strain NIES-293 / 8280G21-1).